The sequence spans 340 residues: Anthranilate phosphoribosyltransferase (340 aa).

5-phospho-alpha-D-ribose 1-diphosphate is bound by residues Gly-83, 86 to 87 (GD), Thr-91, 93 to 96 (NVST), 111 to 119 (KHGNRSVSS), and Ser-123. Position 83 (Gly-83) interacts with anthranilate. Residue Ser-95 coordinates Mg(2+). Asn-114 contacts anthranilate. Anthranilate is bound at residue Arg-169. The Mg(2+) site is built by Asp-228 and Glu-229.

It belongs to the anthranilate phosphoribosyltransferase family. In terms of assembly, homodimer. The cofactor is Mg(2+).

It catalyses the reaction N-(5-phospho-beta-D-ribosyl)anthranilate + diphosphate = 5-phospho-alpha-D-ribose 1-diphosphate + anthranilate. It participates in amino-acid biosynthesis; L-tryptophan biosynthesis; L-tryptophan from chorismate: step 2/5. In terms of biological role, catalyzes the transfer of the phosphoribosyl group of 5-phosphorylribose-1-pyrophosphate (PRPP) to anthranilate to yield N-(5'-phosphoribosyl)-anthranilate (PRA). The protein is Anthranilate phosphoribosyltransferase of Aquifex aeolicus (strain VF5).